The following is a 271-amino-acid chain: Phosphate import ATP-binding protein PstB 1 (271 aa).

One can recognise an ABC transporter domain in the interval 24 to 266 (MIGKDVSVYY…PDDPRTQDYI (243 aa)). 56-63 (GPSGCGKS) is a binding site for ATP.

The protein belongs to the ABC transporter superfamily. Phosphate importer (TC 3.A.1.7) family. The complex is composed of two ATP-binding proteins (PstB), two transmembrane proteins (PstC and PstA) and a solute-binding protein (PstS).

It localises to the cell inner membrane. The enzyme catalyses phosphate(out) + ATP + H2O = ADP + 2 phosphate(in) + H(+). In terms of biological role, part of the ABC transporter complex PstSACB involved in phosphate import. Responsible for energy coupling to the transport system. This is Phosphate import ATP-binding protein PstB 1 from Rhizobium johnstonii (strain DSM 114642 / LMG 32736 / 3841) (Rhizobium leguminosarum bv. viciae).